The primary structure comprises 300 residues: Protein MoxJ (300 aa).

The N-terminal stretch at M1–A25 is a signal peptide.

It localises to the periplasm. Its function is as follows. May be involved in the assemblage of active methanol dehydrogenase and/or its cofactor PQQ in the periplasm. This is Protein MoxJ (moxJ) from Methylorubrum extorquens (strain ATCC 14718 / DSM 1338 / JCM 2805 / NCIMB 9133 / AM1) (Methylobacterium extorquens).